We begin with the raw amino-acid sequence, 156 residues long: Arginine repressor (156 aa).

It belongs to the ArgR family.

The protein resides in the cytoplasm. The protein operates within amino-acid biosynthesis; L-arginine biosynthesis [regulation]. Its function is as follows. Regulates arginine biosynthesis genes. The polypeptide is Arginine repressor (Shewanella woodyi (strain ATCC 51908 / MS32)).